The primary structure comprises 942 residues: MORC family CW-type zinc finger protein 3 (942 aa).

Glycyl lysine isopeptide (Lys-Gly) (interchain with G-Cter in SUMO2) cross-links involve residues Lys191, Lys205, Lys280, and Lys293. The segment at 326-353 (AYEKVGCQLKANNMGVGVVGIIECNFLK) is nuclear matrix binding. The segment at 404–454 (KRPDQTWVQCDACLKWRKLPDGIDQLPEKWYCSNNPDPQFRNCEVPEEPED) adopts a CW-type zinc-finger fold. The Zn(2+) site is built by Cys413, Cys416, Cys435, and Cys446. The interval 503–594 (SFSPVKESVP…ENSTPKPAVD (92 aa)) is RNA binding. Phosphoserine occurs at positions 517 and 543. Lys558 participates in a covalent cross-link: Glycyl lysine isopeptide (Lys-Gly) (interchain with G-Cter in SUMO2). The residue at position 563 (Ser563) is a Phosphoserine. Lys604 is covalently cross-linked (Glycyl lysine isopeptide (Lys-Gly) (interchain with G-Cter in SUMO1); alternate). Lys604 participates in a covalent cross-link: Glycyl lysine isopeptide (Lys-Gly) (interchain with G-Cter in SUMO2); alternate. Positions 623-654 (PKPCVQASSTSTSTSRSDPGITVSTQTDAPGL) are disordered. The span at 630-639 (SSTSTSTSRS) shows a compositional bias: low complexity. Residues Lys657, Lys658, and Lys743 each participate in a glycyl lysine isopeptide (Lys-Gly) (interchain with G-Cter in SUMO1); alternate cross-link. Glycyl lysine isopeptide (Lys-Gly) (interchain with G-Cter in SUMO2); alternate cross-links involve residues Lys657, Lys658, and Lys743. Residues 696–874 (SHQLQELRSE…KSTGQQAAAD (179 aa)) are a coiled coil. Ser768 bears the Phosphoserine mark. A Glycyl lysine isopeptide (Lys-Gly) (interchain with G-Cter in SUMO1); alternate cross-link involves residue Lys797. Lys797 participates in a covalent cross-link: Glycyl lysine isopeptide (Lys-Gly) (interchain with G-Cter in SUMO2); alternate.

As to quaternary structure, homodimer. The sumoylated form interacts with PML (via SUMO-interacting motif). Interacts with TP53. Sumoylation is involved in interaction with PML and localization to PML nuclear bodies.

The protein localises to the nucleus. Its subcellular location is the nucleoplasm. It is found in the nucleus matrix. It localises to the PML body. The protein resides in the chromosome. With respect to regulation, dimerization of the ATPase domain is strictly required for the catalytic activity and binding to double-stranded DNA. Disrupting the interface between ATPase and the CW domains releases autoinhibition since the CW domain sterically impedes binding of the ATPase domain to DNA. Its function is as follows. Nuclear matrix protein which forms MORC3-NBs (nuclear bodies) via an ATP-dependent mechanism and plays a role in innate immunity by restricting different viruses through modulation of the IFN response. Mechanistically, possesses a primary antiviral function through a MORC3-regulated element that activates IFNB1, and this function is guarded by a secondary IFN-repressing function. Sumoylated MORC3-NBs associates with PML-NBs and recruits TP53 and SP100, thus regulating TP53 activity. Binds RNA in vitro. Histone methylation reader which binds to non-methylated (H3K4me0), monomethylated (H3K4me1), dimethylated (H3K4me2) and trimethylated (H3K4me3) 'Lys-4' on histone H3. The order of binding preference is H3K4me3 &gt; H3K4me2 &gt; H3K4me1 &gt; H3K4me0. The polypeptide is MORC family CW-type zinc finger protein 3 (Mus musculus (Mouse)).